Consider the following 310-residue polypeptide: uncharacterized protein (310 aa).

Residues 1–70 form a disordered region; the sequence is MAGNSQRRGA…ARGRTDETET (70 aa). Basic residues predominate over residues 49-62; that stretch reads AAKRAKAQQRRPAR. Positions 262, 282, and 291 each coordinate S-adenosyl-L-methionine.

It belongs to the class IV-like SAM-binding methyltransferase superfamily. RNA methyltransferase TrmH family.

This is an uncharacterized protein from Mycobacterium ulcerans (strain Agy99).